A 514-amino-acid polypeptide reads, in one-letter code: Probable lysine--tRNA ligase, cytoplasmic (514 aa).

It belongs to the class-II aminoacyl-tRNA synthetase family. As to quaternary structure, homodimer.

The protein localises to the cytoplasm. It carries out the reaction tRNA(Lys) + L-lysine + ATP = L-lysyl-tRNA(Lys) + AMP + diphosphate. This chain is Probable lysine--tRNA ligase, cytoplasmic, found in Vairimorpha ceranae (strain BRL01) (Microsporidian parasite).